A 77-amino-acid polypeptide reads, in one-letter code: Translation initiation factor IF-1, chloroplastic (77 aa).

An S1-like domain is found at 1-71 (MKEQKWIHEG…SRGRIIYRLR (71 aa)).

The protein belongs to the IF-1 family. Component of the 30S ribosomal translation pre-initiation complex which assembles on the 30S ribosome in the order IF-2 and IF-3, IF-1 and N-formylmethionyl-tRNA(fMet); mRNA recruitment can occur at any time during PIC assembly.

Its subcellular location is the plastid. It localises to the chloroplast. Functionally, one of the essential components for the initiation of protein synthesis. Stabilizes the binding of IF-2 and IF-3 on the 30S subunit to which N-formylmethionyl-tRNA(fMet) subsequently binds. Helps modulate mRNA selection, yielding the 30S pre-initiation complex (PIC). Upon addition of the 50S ribosomal subunit IF-1, IF-2 and IF-3 are released leaving the mature 70S translation initiation complex. The chain is Translation initiation factor IF-1, chloroplastic from Buxus microphylla (Littleleaf boxwood).